Here is a 733-residue protein sequence, read N- to C-terminus: Catalase-peroxidase 2 (733 aa).

Positions 1–35 (MAEAETHPPIGESQTEPAESGCPMRIKPPVEGGSN) are disordered. The segment at residues 106 to 234 (WHAAGTYRVE…PXXPHMGLIY (129 aa)) is a cross-link (tryptophyl-tyrosyl-methioninium (Trp-Tyr) (with M-260)). Catalysis depends on H107, which acts as the Proton acceptor. The segment at residues 234–260 (YVNPEGPEGNPDYLAAAIDIRETFGRM) is a cross-link (tryptophyl-tyrosyl-methioninium (Tyr-Met) (with W-106)). A heme-binding site is contributed by H275.

The protein belongs to the peroxidase family. Peroxidase/catalase subfamily. As to quaternary structure, homodimer or homotetramer. Requires heme b as cofactor. In terms of processing, formation of the three residue Trp-Tyr-Met cross-link is important for the catalase, but not the peroxidase activity of the enzyme.

The enzyme catalyses H2O2 + AH2 = A + 2 H2O. It catalyses the reaction 2 H2O2 = O2 + 2 H2O. Its function is as follows. Bifunctional enzyme with both catalase and broad-spectrum peroxidase activity. May play a role in the intracellular survival of mycobacteria. This is Catalase-peroxidase 2 from Mycolicibacterium fortuitum (Mycobacterium fortuitum).